We begin with the raw amino-acid sequence, 977 residues long: Pro-apoptotic serine protease NMA111 (977 aa).

Positions 1–36 (MTIQAHKRTLSEVSTSSVGQLKRREGYTEDYTDEGS) are disordered. The interval 64 to 254 (VVSVHFAQVA…LPLDRILRAL (191 aa)) is serine protease. Active-site charge relay system residues include His102, Asp133, and Ser216. PDZ domains follow at residues 271–356 (QWLL…LVVQ) and 749–835 (SVLQ…VRKG).

It belongs to the peptidase S1C family.

It is found in the nucleus. Functionally, nuclear serine protease which mediates apoptosis. This is Pro-apoptotic serine protease NMA111 (NMA111) from Eremothecium gossypii (strain ATCC 10895 / CBS 109.51 / FGSC 9923 / NRRL Y-1056) (Yeast).